The sequence spans 331 residues: UPF0324 membrane protein YdhF (331 aa).

Transmembrane regions (helical) follow at residues 2-20 (SILPGFLLSFAIAIVSYLL), 24-46 (IFHSLGSATIAILLGIILGNLYF), 82-104 (LGFSGVGFILIQMISTIIFVLFM), 114-136 (VSALMASGNAVCGSSAIAAVEPV), 148-170 (IAMVNLMGTILMLSLPFLGTWMF), 204-226 (TLATLFKIMRIIMLVFVVLYFGF), 247-269 (SFLPWYVLGFLVLCTLDTLIHFV), and 308-330 (LIYGLSTLVFQVVLALILISLLI).

The protein belongs to the UPF0324 family.

It localises to the cell membrane. This chain is UPF0324 membrane protein YdhF (ydhF), found in Lactococcus lactis subsp. lactis (strain IL1403) (Streptococcus lactis).